A 613-amino-acid polypeptide reads, in one-letter code: tRNA 5-methylaminomethyl-2-thiouridine biosynthesis bifunctional protein MnmC (613 aa).

Positions 1–225 (MKKAKLIFKD…KREMIKAYLE (225 aa)) are tRNA (mnm(5)s(2)U34)-methyltransferase. The interval 252–613 (IGAGISSAVL…FLIRKLKKGL (362 aa)) is FAD-dependent cmnm(5)s(2)U34 oxidoreductase.

The protein in the N-terminal section; belongs to the methyltransferase superfamily. tRNA (mnm(5)s(2)U34)-methyltransferase family. In the C-terminal section; belongs to the DAO family. Requires FAD as cofactor.

Its subcellular location is the cytoplasm. It carries out the reaction 5-aminomethyl-2-thiouridine(34) in tRNA + S-adenosyl-L-methionine = 5-methylaminomethyl-2-thiouridine(34) in tRNA + S-adenosyl-L-homocysteine + H(+). Functionally, catalyzes the last two steps in the biosynthesis of 5-methylaminomethyl-2-thiouridine (mnm(5)s(2)U) at the wobble position (U34) in tRNA. Catalyzes the FAD-dependent demodification of cmnm(5)s(2)U34 to nm(5)s(2)U34, followed by the transfer of a methyl group from S-adenosyl-L-methionine to nm(5)s(2)U34, to form mnm(5)s(2)U34. The sequence is that of tRNA 5-methylaminomethyl-2-thiouridine biosynthesis bifunctional protein MnmC from Campylobacter jejuni subsp. jejuni serotype O:2 (strain ATCC 700819 / NCTC 11168).